A 515-amino-acid polypeptide reads, in one-letter code: Interferon-induced, double-stranded RNA-activated protein kinase (515 aa).

Ala-2 carries the N-acetylalanine modification. A DRBM 1 domain is found at 8-76 (FYMDKLNKYR…AKLAVDILDN (69 aa)). A Glycyl lysine isopeptide (Lys-Gly) (interchain with G-Cter in ISG15) cross-link involves residue Lys-68. Position 84 is a phosphothreonine (Thr-84). The DRBM 2 domain occupies 95–162 (NYIGLVNSFA…AKEAYQKLLK (68 aa)). Residue Tyr-96 is modified to Phosphotyrosine; by autocatalysis. A Glycyl lysine isopeptide (Lys-Gly) (interchain with G-Cter in ISG15) cross-link involves residue Lys-154. Tyr-157 carries the post-translational modification Phosphotyrosine; by autocatalysis. The segment at 204-224 (ENVFTNGLGENKRKSGVKVSP) is disordered. Position 233 is a phosphothreonine (Thr-233). The tract at residues 241 to 515 (DFEDIEEIGL…ISEKKKRNTC (275 aa)) is interaction with TRAF5. In terms of domain architecture, Protein kinase spans 242–504 (FEDIEEIGLG…EILKTLAEWR (263 aa)). 248–256 (IGLGGFGQV) provides a ligand contact to ATP. Tyr-268 carries the post-translational modification Phosphotyrosine; by autocatalysis. Residue Lys-271 participates in ATP binding. Asp-376 serves as the catalytic Proton acceptor. Phosphothreonine; by autocatalysis occurs at positions 409 and 414. Ser-419 carries the phosphoserine modification.

It belongs to the protein kinase superfamily. Ser/Thr protein kinase family. GCN2 subfamily. Homodimer. Interacts with DNAJC3 and STRBP. Forms a complex with FANCA, FANCC, FANCG and HSP70. Interacts with ADAR/ADAR1. The inactive form interacts with NCK1. Interacts (via the kinase catalytic domain) with STAT3 (via SH2 domain), TRAF2 (C-terminus), TRAF5 (C-terminus) and TRAF6 (C-terminus). Interacts with MAP2K6, TARBP2, NLRP1, NLRC4 and AIM2. Interacts (via DRBM 1 domain) with DUS2L (via DRBM domain). Interacts with DHX9 (via N-terminus) and this interaction is dependent upon activation of the kinase. The inactive form interacts with GSN. Interacts with IKBKB/IKKB, NPM1, NLRP3 and IRS1. In terms of processing, autophosphorylated on several Ser, Thr and Tyr residues. Autophosphorylation of Thr-414 is dependent on Thr-409 and is stimulated by dsRNA binding and dimerization. Autophosphorylation apparently leads to the activation of the kinase. Tyrosine autophosphorylation is essential for efficient dsRNA-binding, dimerization, and kinase activation. Expressed in heart, lung, brain, kidney, testes, thymus and bone marrow.

The protein localises to the cytoplasm. Its subcellular location is the nucleus. The protein resides in the perinuclear region. The enzyme catalyses L-seryl-[protein] + ATP = O-phospho-L-seryl-[protein] + ADP + H(+). It carries out the reaction L-threonyl-[protein] + ATP = O-phospho-L-threonyl-[protein] + ADP + H(+). The catalysed reaction is L-tyrosyl-[protein] + ATP = O-phospho-L-tyrosyl-[protein] + ADP + H(+). Initially produced in an inactive form and is activated by binding to viral dsRNA, which causes dimerization and autophosphorylation in the activation loop and stimulation of function. ISGylation can activate it in the absence of viral infection. Can also be activated by heparin, pro-inflammatory stimuli, growth factors, cytokines, oxidative stress and the cellular protein PRKRA. Activity is markedly stimulated by manganese ions. Activation is blocked by the cellular proteins TARBP2, DUS2L, NPM1, NCK1 and ADAR. Functionally, IFN-induced dsRNA-dependent serine/threonine-protein kinase that phosphorylates the alpha subunit of eukaryotic translation initiation factor 2 (EIF2S1/eIF-2-alpha) and plays a key role in the innate immune response to viral infection. Inhibits viral replication via the integrated stress response (ISR): EIF2S1/eIF-2-alpha phosphorylation in response to viral infection converts EIF2S1/eIF-2-alpha in a global protein synthesis inhibitor, resulting to a shutdown of cellular and viral protein synthesis, while concomitantly initiating the preferential translation of ISR-specific mRNAs, such as the transcriptional activator ATF4. Exerts its antiviral activity on a wide range of DNA and RNA viruses including west nile virus (WNV), sindbis virus (SV), foot-and-mouth virus (FMDV), semliki Forest virus (SFV) and lymphocytic choriomeningitis virus (LCMV). Also involved in the regulation of signal transduction, apoptosis, cell proliferation and differentiation: phosphorylates other substrates including p53/TP53, PPP2R5A, DHX9, ILF3, and IRS1. In addition to serine/threonine-protein kinase activity, also has tyrosine-protein kinase activity and phosphorylates CDK1 at 'Tyr-4' upon DNA damage, facilitating its ubiquitination and proteasomal degradation. Either as an adapter protein and/or via its kinase activity, can regulate various signaling pathways (p38 MAP kinase, NF-kappa-B and insulin signaling pathways) and transcription factors (JUN, STAT1, STAT3, IRF1, ATF3) involved in the expression of genes encoding pro-inflammatory cytokines and IFNs. Activates the NF-kappa-B pathway via interaction with IKBKB and TRAF family of proteins and activates the p38 MAP kinase pathway via interaction with MAP2K6. Can act as both a positive and negative regulator of the insulin signaling pathway (ISP). Negatively regulates ISP by inducing the inhibitory phosphorylation of insulin receptor substrate 1 (IRS1) at 'Ser-312' and positively regulates ISP via phosphorylation of PPP2R5A which activates FOXO1, which in turn up-regulates the expression of insulin receptor substrate 2 (IRS2). Can regulate NLRP3 inflammasome assembly and the activation of NLRP3, NLRP1, AIM2 and NLRC4 inflammasomes. Plays a role in the regulation of the cytoskeleton by binding to gelsolin (GSN), sequestering the protein in an inactive conformation away from actin. This Mus musculus (Mouse) protein is Interferon-induced, double-stranded RNA-activated protein kinase (Eif2ak2).